The chain runs to 295 residues: Epidermal growth factor-like protein 8 (295 aa).

The first 25 residues, 1-25, serve as a signal peptide directing secretion; the sequence is MGSRAELHTLLGGLSFLLLLMSGQG. Positions 34 to 112 constitute an EMI domain; that stretch reads SQGVCSRQTL…RHPGALTCDE (79 aa). 9 disulfide bridges follow: C38–C97, C65–C71, C96–C110, C115–C125, C119–C131, C133–C142, C149–C160, C156–C169, and C171–C184. N-linked (GlcNAc...) asparagine glycosylation occurs at N50. Residues 111 to 143 enclose the EGF-like 1 domain; sequence DEAICAKPCQNGGVCVRPDQCECAPGWGGRHCH. In terms of domain architecture, EGF-like 2; calcium-binding spans 145 to 185; sequence DVDECRTGVTLCSHRCHNTAGSFTCGCPHGLVLGPDGRTCA. A coiled-coil region spans residues 202 to 233; it reads VREAGREDRALRREIRELRGRLERLEQWAGQA.

It is found in the secreted. The chain is Epidermal growth factor-like protein 8 (EGFL8) from Sus scrofa (Pig).